The following is a 256-amino-acid chain: MTTQGVRIGIAGINGRVGRLLREEVTTGGGILSGGTARDAAPASDVFATLDALAPRCDVVIDFTHAATVRTHADILARAGVAWVLGTTGLSAADLEAVRTAAGRIPVVHAANYSPGVTLVTRLARQMAAALPSATYDAEILEMHHRQKVDAPSGTALAIGQAVADGRGIDLASHIEDGRTGHTGPRRADAIGFAVLRGGQIVGEHTVSFTSATEQIALTHRSFDRRIYATGAVRAALWLRGQASGLYDMEDVLGLD.

Residues 12-17 (GINGRV), Asp-39, 86-88 (GTT), and 110-113 (AANY) each bind NAD(+). The Proton donor/acceptor role is filled by His-144. (S)-2,3,4,5-tetrahydrodipicolinate is bound at residue His-145. The Proton donor role is filled by Lys-148. 154 to 155 (GT) contacts (S)-2,3,4,5-tetrahydrodipicolinate.

It belongs to the DapB family.

It localises to the cytoplasm. It catalyses the reaction (S)-2,3,4,5-tetrahydrodipicolinate + NAD(+) + H2O = (2S,4S)-4-hydroxy-2,3,4,5-tetrahydrodipicolinate + NADH + H(+). The catalysed reaction is (S)-2,3,4,5-tetrahydrodipicolinate + NADP(+) + H2O = (2S,4S)-4-hydroxy-2,3,4,5-tetrahydrodipicolinate + NADPH + H(+). It functions in the pathway amino-acid biosynthesis; L-lysine biosynthesis via DAP pathway; (S)-tetrahydrodipicolinate from L-aspartate: step 4/4. Functionally, catalyzes the conversion of 4-hydroxy-tetrahydrodipicolinate (HTPA) to tetrahydrodipicolinate. This chain is 4-hydroxy-tetrahydrodipicolinate reductase, found in Gluconacetobacter diazotrophicus (strain ATCC 49037 / DSM 5601 / CCUG 37298 / CIP 103539 / LMG 7603 / PAl5).